A 71-amino-acid polypeptide reads, in one-letter code: Serine palmitoyltransferase small subunit A (71 aa).

Residues 1-12 are Cytoplasmic-facing; sequence MAGMALARAWKQ. Residues 13–29 form a helical membrane-spanning segment; it reads MSWFYYQYLLVTALYML. The Lumenal segment spans residues 30–34; the sequence is EPWER. A helical membrane pass occupies residues 35-57; sequence TVFNSMLVSIVGMALYTGYVFMP. Topologically, residues 58–71 are cytoplasmic; it reads QHIMAILHYFEIVQ.

Belongs to the SPTSS family. SPTSSA subfamily. Component of the serine palmitoyltransferase (SPT) complex, which is composed of SPTLC1, SPTLC2 or SPTLC3 and SPTSSA or SPTSSB. The heterodimer consisting of SPTLC1 and SPTLC2/SPTLC3 forms the catalytic core of the enzyme, while SPTSSA or SPTSSB subunits determine substrate specificity. SPT also interacts with ORMDL proteins, especially ORMDL3, which negatively regulate SPT activity in the presence of ceramides. Interacts with MBOAT7; the interaction plays a role in MBOAT7 localization to mitochondria-associated membranes.

It is found in the endoplasmic reticulum membrane. It participates in lipid metabolism; sphingolipid metabolism. Component of the serine palmitoyltransferase multisubunit enzyme (SPT) that catalyzes the initial and rate-limiting step in sphingolipid biosynthesis by condensing L-serine and activated acyl-CoA (most commonly palmitoyl-CoA) to form long-chain bases. The SPT complex is composed of SPTLC1, SPTLC2 or SPTLC3 and SPTSSA or SPTSSB. Within this complex, the heterodimer consisting of SPTLC1 and SPTLC2/SPTLC3 forms the catalytic core. Within the SPT complex, SPTSSA stimulates the catalytic activity and plays a role in substrate specificity, which depends upon the overall complex composition. The SPTLC1-SPTLC2-SPTSSA complex shows a strong preference for C16-CoA substrate, while the SPTLC1-SPTLC3-SPTSSA isozyme uses both C14-CoA and C16-CoA as substrates, with a slight preference for C14-CoA. Independently of its action as a SPT component, may be involved in MBOAT7 localization to mitochondria-associated membranes, a membrane bridge between the endoplasmic reticulum and mitochondria, may hence affect MBOAT7-catalyzed incorporation of arachidonic acid into phosphatidylinositol. This chain is Serine palmitoyltransferase small subunit A, found in Homo sapiens (Human).